Consider the following 457-residue polypeptide: MDAQLNNLWEQALNIIKGEISEISFNTWIKSCTPISISDNILKLSVPNEFTKGILDTRYKDLLIQALKIVTSRKFKIEFYLESDLEEEKENEEKQKEEKKENTNDVDGSIVVSDEMSATLNPKYTFQSFVIGNSNRFAHAASLAVAESPAKAYNPLFIYGGVGLGKTHLMHAIGHYILQENPKAKVVYVSSEKFTNELINAIKDDKNEEFRNKYRKVDVLLIDDIQFIAGKERTQEEFFHTFNALHEENKQIILSSDRPPKEIPTLEDRLRSRFEWGLIADIQPPDFETRMAILKKKADVEGLNVPNEVMVYIATKIKSNIRELEGALIRIIAYSSLTNRDVSVDLASEALKDIISNKESAPVTVKTIQESVANYYNLRIEDLKSQRRTRNIAYPRQIAMYLSRKLTDMSLPKIGEEFGGRDHTTVIHAYEKISENLKTDEGLQSMINDITKKLTQK.

The tract at residues Met1 to Phe75 is domain I, interacts with DnaA modulators. Positions Phe75–Ala118 are domain II. The segment at Thr119–Ser335 is domain III, AAA+ region. Positions 163, 165, 166, and 167 each coordinate ATP. The domain IV, binds dsDNA stretch occupies residues Ser336–Lys457.

This sequence belongs to the DnaA family. As to quaternary structure, oligomerizes as a right-handed, spiral filament on DNA at oriC.

It localises to the cytoplasm. Functionally, plays an essential role in the initiation and regulation of chromosomal replication. ATP-DnaA binds to the origin of replication (oriC) to initiate formation of the DNA replication initiation complex once per cell cycle. Binds the DnaA box (a 9 base pair repeat at the origin) and separates the double-stranded (ds)DNA. Forms a right-handed helical filament on oriC DNA; dsDNA binds to the exterior of the filament while single-stranded (ss)DNA is stabiized in the filament's interior. The ATP-DnaA-oriC complex binds and stabilizes one strand of the AT-rich DNA unwinding element (DUE), permitting loading of DNA polymerase. After initiation quickly degrades to an ADP-DnaA complex that is not apt for DNA replication. Binds acidic phospholipids. The polypeptide is Chromosomal replication initiator protein DnaA (Clostridium perfringens (strain ATCC 13124 / DSM 756 / JCM 1290 / NCIMB 6125 / NCTC 8237 / Type A)).